We begin with the raw amino-acid sequence, 190 residues long: Lipid A acyltransferase PagP (190 aa).

The first 29 residues, 1–29 (MYVAMIIRKYFLIIALLLMPWLAIPSVSA), serve as a signal peptide directing secretion. Residues H62, D105, and S106 contribute to the active site.

Belongs to the lipid A palmitoyltransferase family. In terms of assembly, homodimer.

It is found in the cell outer membrane. It catalyses the reaction a lipid A + a 1,2-diacyl-sn-glycero-3-phosphocholine = a hepta-acyl lipid A + a 2-acyl-sn-glycero-3-phosphocholine. It carries out the reaction a lipid IVA + a 1,2-diacyl-sn-glycero-3-phosphocholine = a lipid IVB + a 2-acyl-sn-glycero-3-phosphocholine. The enzyme catalyses a lipid IIA + a 1,2-diacyl-sn-glycero-3-phosphocholine = a lipid IIB + a 2-acyl-sn-glycero-3-phosphocholine. Functionally, transfers a fatty acid residue from the sn-1 position of a phospholipid to the N-linked hydroxyfatty acid chain on the proximal unit of lipid A or its precursors. Required for resistance to cationic antimicrobial peptides (CAMPs). Modifications of lipid A with an acyl chain allow to evade host immune defenses by resisting antimicrobial peptides and attenuating the inflammatory response to infection triggered by lipopolysaccharide through the Toll-like receptor 4 (TLR4) signal transduction pathway. The polypeptide is Lipid A acyltransferase PagP (Salmonella typhimurium (strain LT2 / SGSC1412 / ATCC 700720)).